We begin with the raw amino-acid sequence, 592 residues long: V-type ATP synthase alpha chain (592 aa).

An ATP-binding site is contributed by 232 to 239 (GPFGAGKT).

It belongs to the ATPase alpha/beta chains family.

It carries out the reaction ATP + H2O + 4 H(+)(in) = ADP + phosphate + 5 H(+)(out). Functionally, produces ATP from ADP in the presence of a proton gradient across the membrane. The V-type alpha chain is a catalytic subunit. The protein is V-type ATP synthase alpha chain of Clostridium botulinum (strain Alaska E43 / Type E3).